The following is a 259-amino-acid chain: DNA repair protein RecO (259 aa).

It belongs to the RecO family.

Its function is as follows. Involved in DNA repair and RecF pathway recombination. In Chloroherpeton thalassium (strain ATCC 35110 / GB-78), this protein is DNA repair protein RecO.